We begin with the raw amino-acid sequence, 544 residues long: Rubrofusarin-specific efflux pump aurT (544 aa).

Basic and acidic residues predominate over residues 1-12 (MTDNTDMEKLDR). Residues 1 to 42 (MTDNTDMEKLDRATTPTPIPNEAPPTSEPSESKPEEAEDESK) form a disordered region. Pro residues predominate over residues 17 to 27 (TPIPNEAPPTS). A compositionally biased stretch (basic and acidic residues) spans 30 to 42 (SESKPEEAEDESK). 8 helical membrane passes run 45–65 (HGLKLAAIILSNMVAMFLVAL), 89–111 (WYASAYLITSSATQLLWGRIFTF), 116–136 (TVYLVAIFFFELGSLLCGVAP), 146–166 (AIAGAGSAGIYSGSTILITTV), 177–197 (GMMGAVFGIASVIAPLIGGAF), 205–225 (WCFYINLPVGGAAVACLILLF), 246–266 (WGNLVFLPGVICLILALQWGG), and 276–296 (IVALLVLACVLLLVFIGIQIW). N-linked (GlcNAc...) asparagine glycosylation is present at N300. 6 helical membrane-spanning segments follow: residues 318-338 (IFAFCLGSVLIVFLIALPIWF), 357-377 (VLSLVFGAIVSGGVINGVGWF), 380-400 (VFFSSVIFMSVGGGLITTFVV), 407-427 (WIGYQIILGLGIGQGMQLASL), 444-464 (LMFFAQSLGGSVLVCVAQAVF), and 514-534 (YFYVGLAAACFAVLPSLGIEW).

It belongs to the major facilitator superfamily. TCR/Tet family.

It localises to the cell membrane. It functions in the pathway pigment biosynthesis. In terms of biological role, rubrofusarin-specific efflux pump; part of the gene cluster that mediates the biosynthesis of aurofusarin, a red mycelium pigment which is acting as a mycotoxin. The first step is performed by the polyketide synthase which condenses one acetyl-CoA and 6 malonyl-CoA units to form the first intermediate, the cyclic heptaketide and yellow pigment YWA1. The C2 hydroxyl group in the pyrone ring of YWA1 is probably formed during ring closure by an aldol-type cyclization reaction. The dehydratase aurZ then acts as the first tailoring enzyme in the aurofusarin biosynthetic pathway by converting YWA1 to nor-rubrofusarin. Nor-rubrofusarin is then methylated to rubrofusarin by the O-methyltransferase aurJ. Rubrofusarin is then transported across the plasma membrane by the rubrofusarin-specific pump aurT for further enzymatic processing by the extracellular complex composed of GIP1, aurF, aurO and aurS to yield aurofusarin. This Gibberella zeae (strain ATCC MYA-4620 / CBS 123657 / FGSC 9075 / NRRL 31084 / PH-1) (Wheat head blight fungus) protein is Rubrofusarin-specific efflux pump aurT.